The following is a 129-amino-acid chain: Small ribosomal subunit protein uS13 (129 aa).

The interval 96 to 129 (GLPVRGQRTSTNARTRKGPRKTVGVSKAAAAAKA) is disordered.

Belongs to the universal ribosomal protein uS13 family. As to quaternary structure, part of the 30S ribosomal subunit. Forms a loose heterodimer with protein S19. Forms two bridges to the 50S subunit in the 70S ribosome.

Functionally, located at the top of the head of the 30S subunit, it contacts several helices of the 16S rRNA. In the 70S ribosome it contacts the 23S rRNA (bridge B1a) and protein L5 of the 50S subunit (bridge B1b), connecting the 2 subunits; these bridges are implicated in subunit movement. Contacts the tRNAs in the A and P-sites. The chain is Small ribosomal subunit protein uS13 from Opitutus terrae (strain DSM 11246 / JCM 15787 / PB90-1).